Consider the following 51-residue polypeptide: Cuticle protein CP575 (51 aa).

A Chitin-binding type R&amp;R domain is found at 1 to 51 (GDIIDVDNDLFEHEQDGVAGTSVHGEYEAYDAYGNEYEVKYIADHLGFRVL).

Calcified shell.

This Cancer pagurus (Rock crab) protein is Cuticle protein CP575.